The primary structure comprises 463 residues: Ribulose bisphosphate carboxylase (463 aa).

A substrate-binding site is contributed by Asn-116. The Proton acceptor role is filled by Lys-171. Lys-173 contributes to the substrate binding site. Mg(2+) is bound by residues Lys-196, Asp-198, and Glu-199. The residue at position 196 (Lys-196) is an N6-carboxylysine. The active-site Proton acceptor is His-294. 3 residues coordinate substrate: Arg-295, His-328, and Ser-375.

This sequence belongs to the RuBisCO large chain family. Type II subfamily. In terms of assembly, homodimer. Requires Mg(2+) as cofactor.

It carries out the reaction 2 (2R)-3-phosphoglycerate + 2 H(+) = D-ribulose 1,5-bisphosphate + CO2 + H2O. The catalysed reaction is D-ribulose 1,5-bisphosphate + O2 = 2-phosphoglycolate + (2R)-3-phosphoglycerate + 2 H(+). RuBisCO catalyzes two reactions: the carboxylation of D-ribulose 1,5-bisphosphate, the primary event in carbon dioxide fixation, as well as the oxidative fragmentation of the pentose substrate. Both reactions occur simultaneously and in competition at the same active site. The protein is Ribulose bisphosphate carboxylase of Hydrogenovibrio marinus.